The sequence spans 282 residues: Endochitinase 4 (282 aa).

The GH18 domain occupies 1–282; it reads GAKNGVHPPL…TWSINWDGSK (282 aa). Glu112 (proton donor) is an active-site residue. Residue Asn265 is glycosylated (N-linked (GlcNAc...) asparagine).

Belongs to the glycosyl hydrolase 18 family. Chitinase class V subfamily.

The protein resides in the secreted. It carries out the reaction Random endo-hydrolysis of N-acetyl-beta-D-glucosaminide (1-&gt;4)-beta-linkages in chitin and chitodextrins.. Its function is as follows. Secreted chitinase involved in the degradation of chitin, a component of the cell walls of fungi and exoskeletal elements of some animals (including worms and arthropods). Participates in the infection process and directly acts in the penetration process of the host cuticle. In Metarhizium anisopliae (Entomophthora anisopliae), this protein is Endochitinase 4 (chi4).